Consider the following 373-residue polypeptide: Chorismate synthase (373 aa).

The NADP(+) site is built by Arg-48 and Arg-54. Residues 131-133, 243-244, Gly-288, 303-307, and Arg-329 contribute to the FMN site; these read RSS, NA, and KPTSS.

Belongs to the chorismate synthase family. As to quaternary structure, homotetramer. Requires FMNH2 as cofactor.

The enzyme catalyses 5-O-(1-carboxyvinyl)-3-phosphoshikimate = chorismate + phosphate. It participates in metabolic intermediate biosynthesis; chorismate biosynthesis; chorismate from D-erythrose 4-phosphate and phosphoenolpyruvate: step 7/7. Catalyzes the anti-1,4-elimination of the C-3 phosphate and the C-6 proR hydrogen from 5-enolpyruvylshikimate-3-phosphate (EPSP) to yield chorismate, which is the branch point compound that serves as the starting substrate for the three terminal pathways of aromatic amino acid biosynthesis. This reaction introduces a second double bond into the aromatic ring system. This Beijerinckia indica subsp. indica (strain ATCC 9039 / DSM 1715 / NCIMB 8712) protein is Chorismate synthase.